The primary structure comprises 289 residues: Bidirectional sugar transporter SWEET10 (289 aa).

Over 1 to 5 the chain is Extracellular; it reads MAISQ. The chain crosses the membrane as a helical span at residues 6 to 26; that stretch reads AVLATVFGILGNIISFFVCLA. Residues 11–96 enclose the MtN3/slv 1 domain; the sequence is VFGILGNIIS…SLFFFYAPKK (86 aa). The Cytoplasmic portion of the chain corresponds to 27-43; it reads PIPTFVRIYKRKSSEGY. The helical transmembrane segment at 44–64 threads the bilayer; that stretch reads QSIPYVISLFSAMLWMYYAMI. Residues 65 to 70 lie on the Extracellular side of the membrane; that stretch reads KKDAMM. A helical transmembrane segment spans residues 71-91; that stretch reads LITINSFAFVVQIVYISLFFF. Residues 92–103 are Cytoplasmic-facing; the sequence is YAPKKEKTLTVK. The helical transmembrane segment at 104-124 threads the bilayer; the sequence is FVLFVDVLGFGAIFVLTYFII. The Extracellular portion of the chain corresponds to 125 to 131; sequence HANKRVQ. Residues 131–214 enclose the MtN3/slv 2 domain; that stretch reads QVLGYICMVF…QMILFLIYKK (84 aa). The chain crosses the membrane as a helical span at residues 132–152; that stretch reads VLGYICMVFALSVFVAPLGII. Over 153-165 the chain is Cytoplasmic; the sequence is RKVIKTKSAEFMP. Residues 166–186 form a helical membrane-spanning segment; that stretch reads FGLSFFLTLSAVMWFFYGLLL. Residues 187–190 lie on the Extracellular side of the membrane; that stretch reads KDMN. Residues 191–211 traverse the membrane as a helical segment; that stretch reads IALPNVLGFIFGVLQMILFLI. Residues 212 to 289 lie on the Cytoplasmic side of the membrane; it reads YKKPGTKVLE…EKEVFLISKN (78 aa).

Belongs to the SWEET sugar transporter family. Forms heterooligomers with SWEET8.

It localises to the cell membrane. In terms of biological role, mediates both low-affinity uptake and efflux of sugar across the plasma membrane. The protein is Bidirectional sugar transporter SWEET10 of Arabidopsis thaliana (Mouse-ear cress).